The sequence spans 720 residues: uncharacterized protein (720 aa).

Residue glycine 2 is the site of N-myristoyl glycine; by host attachment.

This is an uncharacterized protein from Cryphonectria parasitica mycoreovirus 1 (strain 9B21) (CpMYRV-1).